The primary structure comprises 476 residues: Glutamate mutase epsilon subunit (476 aa).

Arg62 contributes to the L-glutamate binding site. Position 64 (Gly64) interacts with adenosylcob(III)alamin. Arg96 provides a ligand contact to L-glutamate. Asn119 serves as a coordination point for adenosylcob(III)alamin. L-glutamate-binding positions include 145–146 (RH), Glu167, and Tyr173. Residue Pro176 coordinates adenosylcob(III)alamin. Tyr177 is a binding site for L-glutamate. Residues Phe289, Lys318, and Glu322 each contribute to the adenosylcob(III)alamin site.

Belongs to the methylaspartate mutase GlmE subunit family. In terms of assembly, heterotetramer composed of 2 epsilon subunits (GlmE) and 2 sigma subunits (GlmS). GlmE exists as a homodimer and GlmS as a monomer. Requires adenosylcob(III)alamin as cofactor.

The enzyme catalyses (2S,3S)-3-methyl-L-aspartate = L-glutamate. It participates in amino-acid degradation; L-glutamate degradation via mesaconate pathway; acetate and pyruvate from L-glutamate: step 1/4. Its function is as follows. Catalyzes the carbon skeleton rearrangement of L-glutamate to L-threo-3-methylaspartate ((2S,3S)-3-methylaspartate). The sequence is that of Glutamate mutase epsilon subunit from Halobacterium salinarum (strain ATCC 700922 / JCM 11081 / NRC-1) (Halobacterium halobium).